The primary structure comprises 326 residues: Beta-ketoacyl-[acyl-carrier-protein] synthase III (326 aa).

Residues Cys-112 and His-251 contribute to the active site. An ACP-binding region spans residues 252–256 (QANSR). The active site involves Asn-281.

It belongs to the thiolase-like superfamily. FabH family. Homodimer.

The protein resides in the cytoplasm. The enzyme catalyses malonyl-[ACP] + acetyl-CoA + H(+) = 3-oxobutanoyl-[ACP] + CO2 + CoA. The protein operates within lipid metabolism; fatty acid biosynthesis. In terms of biological role, catalyzes the condensation reaction of fatty acid synthesis by the addition to an acyl acceptor of two carbons from malonyl-ACP. Catalyzes the first condensation reaction which initiates fatty acid synthesis and may therefore play a role in governing the total rate of fatty acid production. Possesses both acetoacetyl-ACP synthase and acetyl transacylase activities. Its substrate specificity determines the biosynthesis of branched-chain and/or straight-chain of fatty acids. The chain is Beta-ketoacyl-[acyl-carrier-protein] synthase III from Clostridium botulinum (strain Kyoto / Type A2).